Here is a 523-residue protein sequence, read N- to C-terminus: Frizzled-2 (523 aa).

The FZ domain occupies proline 1–glutamine 120. Over proline 1 to tryptophan 205 the chain is Extracellular. Cystine bridges form between cysteine 6-cysteine 67, cysteine 14-cysteine 60, cysteine 51-cysteine 88, cysteine 77-cysteine 117, and cysteine 81-cysteine 105. A glycan (N-linked (GlcNAc...) asparagine) is linked at asparagine 20. Asparagine 121 is a glycosylation site (N-linked (GlcNAc...) asparagine). Residues isoleucine 206–valine 226 traverse the membrane as a helical segment. Residues aspartate 227–proline 237 are Cytoplasmic-facing. The chain crosses the membrane as a helical span at residues isoleucine 238–leucine 258. The Extracellular portion of the chain corresponds to glutamate 259 to cysteine 285. Residues threonine 286–leucine 306 traverse the membrane as a helical segment. At serine 307–glutamine 328 the chain is on the cytoplasmic side. Residues tyrosine 329 to glycine 349 form a helical membrane-spanning segment. The Extracellular segment spans residues glutamine 350–glycine 372. A helical transmembrane segment spans residues phenylalanine 373–phenylalanine 393. Topologically, residues valine 394–arginine 419 are cytoplasmic. The helical transmembrane segment at isoleucine 420–tyrosine 440 threads the bilayer. Residues glutamate 441 to threonine 477 lie on the Extracellular side of the membrane. Residues valine 478–phenylalanine 498 form a helical membrane-spanning segment. Residues serine 499–valine 523 lie on the Cytoplasmic side of the membrane. Positions lysine 501 to tryptophan 506 match the Lys-Thr-X-X-X-Trp motif, mediates interaction with the PDZ domain of Dvl family members motif. Positions threonine 521–valine 523 match the PDZ-binding motif.

The protein belongs to the G-protein coupled receptor Fz/Smo family. In terms of tissue distribution, expressed in the developing head and limbs. Expressed broadly in cranial ectoderm. Also expressed in the developing somites (dermomyotome) and in other cranial placodes, including the olfactory, lens, and otic placodes (rostral rim of the vesicle).

It localises to the membrane. It is found in the cell membrane. In terms of biological role, receptor for Wnt proteins. Most of frizzled receptors are coupled to the beta-catenin canonical signaling pathway, which leads to the activation of disheveled proteins, inhibition of GSK-3 kinase, nuclear accumulation of beta-catenin and activation of Wnt target genes. A second signaling pathway involving PKC and calcium fluxes has been seen for some family members, but it is not yet clear if it represents a distinct pathway or if it can be integrated in the canonical pathway, as PKC seems to be required for Wnt-mediated inactivation of GSK-3 kinase. Both pathways seem to involve interactions with G-proteins. May be involved in transduction and intercellular transmission of polarity information during tissue morphogenesis and/or in differentiated tissues. This chain is Frizzled-2 (FZD2), found in Gallus gallus (Chicken).